The primary structure comprises 150 residues: Deoxyuridine 5'-triphosphate nucleotidohydrolase (150 aa).

Substrate contacts are provided by residues 69-71 (RSG), asparagine 82, and 86-88 (LID).

It belongs to the dUTPase family. Mg(2+) is required as a cofactor.

It carries out the reaction dUTP + H2O = dUMP + diphosphate + H(+). Its pathway is pyrimidine metabolism; dUMP biosynthesis; dUMP from dCTP (dUTP route): step 2/2. Functionally, this enzyme is involved in nucleotide metabolism: it produces dUMP, the immediate precursor of thymidine nucleotides and it decreases the intracellular concentration of dUTP so that uracil cannot be incorporated into DNA. The chain is Deoxyuridine 5'-triphosphate nucleotidohydrolase from Methylobacillus flagellatus (strain ATCC 51484 / DSM 6875 / VKM B-1610 / KT).